A 222-amino-acid polypeptide reads, in one-letter code: Protein-L-isoaspartate O-methyltransferase (222 aa).

Residue S70 is part of the active site.

This sequence belongs to the methyltransferase superfamily. L-isoaspartyl/D-aspartyl protein methyltransferase family.

It localises to the cytoplasm. The enzyme catalyses [protein]-L-isoaspartate + S-adenosyl-L-methionine = [protein]-L-isoaspartate alpha-methyl ester + S-adenosyl-L-homocysteine. In terms of biological role, catalyzes the methyl esterification of L-isoaspartyl residues in peptides and proteins that result from spontaneous decomposition of normal L-aspartyl and L-asparaginyl residues. It plays a role in the repair and/or degradation of damaged proteins. The polypeptide is Protein-L-isoaspartate O-methyltransferase (Jannaschia sp. (strain CCS1)).